The sequence spans 494 residues: Glutamate--tRNA ligase (494 aa).

Positions 10 to 20 (PSPTGDPHVGT) match the 'HIGH' region motif. The Zn(2+) site is built by cysteine 107, cysteine 109, cysteine 134, and histidine 136. Residues 251-255 (KLSKR) carry the 'KMSKS' region motif. Lysine 254 is a binding site for ATP.

This sequence belongs to the class-I aminoacyl-tRNA synthetase family. Glutamate--tRNA ligase type 1 subfamily. As to quaternary structure, monomer. Zn(2+) serves as cofactor.

It localises to the cytoplasm. The catalysed reaction is tRNA(Glu) + L-glutamate + ATP = L-glutamyl-tRNA(Glu) + AMP + diphosphate. Its function is as follows. Catalyzes the attachment of glutamate to tRNA(Glu) in a two-step reaction: glutamate is first activated by ATP to form Glu-AMP and then transferred to the acceptor end of tRNA(Glu). The protein is Glutamate--tRNA ligase of Pseudomonas paraeruginosa (strain DSM 24068 / PA7) (Pseudomonas aeruginosa (strain PA7)).